Consider the following 360-residue polypeptide: Mitogen-activated protein kinase 14 (360 aa).

Ser2 bears the N-acetylserine mark. The residue at position 2 (Ser2) is a Phosphoserine. The residue at position 16 (Thr16) is a Phosphothreonine. Residues 24–308 (YQNLSPVGSG…AAQALAHAYF (285 aa)) form the Protein kinase domain. ATP contacts are provided by residues 30-38 (VGSGAYGSV) and Lys53. Residue Lys53 is modified to N6-acetyllysine. Catalysis depends on Asp150, which acts as the Proton acceptor. At Lys152 the chain carries N6-acetyllysine. Phosphothreonine; by MAP2K3, MAP2K4, MAP2K6 and autocatalysis is present on Thr180. The short motif at 180–182 (TGY) is the TXY element. Tyr182 carries the phosphotyrosine; by MAP2K3, MAP2K4, MAP2K6 and autocatalysis modification. Thr263 is modified (phosphothreonine). Tyr323 bears the Phosphotyrosine; by ZAP70 mark.

The protein belongs to the protein kinase superfamily. CMGC Ser/Thr protein kinase family. MAP kinase subfamily. In terms of assembly, component of a signaling complex containing at least AKAP13, PKN1, MAPK14, ZAK and MAP2K3. Within this complex, AKAP13 interacts directly with PKN1, which in turn recruits MAPK14, MAP2K3 and ZAK. Binds to a kinase interaction motif within the protein tyrosine phosphatase, PTPRR. This interaction retains MAPK14 in the cytoplasm and prevents nuclear accumulation. Interacts with SPAG9 and GADD45A. Interacts with CDC25B, CDC25C, DUSP1, DUSP10, DUSP16, NP60, SUPT20H and TAB1. Interacts with casein kinase II subunits CSNK2A1 and CSNK2B. Interacts with PPM1D. Interacts with CDK5RAP3; recruits PPM1D to MAPK14 and may regulate its dephosphorylation. Interacts with DUSP2; this interaction does not lead to catalytic activation of DUSP2 and dephosphrylation of MAPK14. Mg(2+) serves as cofactor. Post-translationally, dually phosphorylated on Thr-180 and Tyr-182 by the MAP2Ks MAP2K3/MKK3, MAP2K4/MKK4 and MAP2K6/MKK6 in response to inflammatory citokines, environmental stress or growth factors, which activates the enzyme. Dual phosphorylation can also be mediated by TAB1-mediated autophosphorylation. TCR engagement in T-cells also leads to Tyr-323 phosphorylation by ZAP70. Dephosphorylated and inactivated by DUPS1, DUSP10 and DUSP16. PPM1D also mediates dephosphorylation and inactivation of MAPK14. In terms of processing, acetylated at Lys-53 and Lys-152 by KAT2B and EP300. Acetylation at Lys-53 increases the affinity for ATP and enhances kinase activity. Lys-53 and Lys-152 are deacetylated by HDAC3. Ubiquitinated. Ubiquitination leads to degradation by the proteasome pathway.

It is found in the cytoplasm. The protein localises to the nucleus. It catalyses the reaction L-seryl-[protein] + ATP = O-phospho-L-seryl-[protein] + ADP + H(+). The enzyme catalyses L-threonyl-[protein] + ATP = O-phospho-L-threonyl-[protein] + ADP + H(+). Activated by cell stresses such as DNA damage, heat shock, osmotic shock, anisomycin and sodium arsenite, as well as pro-inflammatory stimuli such as bacterial lipopolysaccharide (LPS) and interleukin-1. Activation occurs through dual phosphorylation of Thr-180 and Tyr-182 by either of two dual specificity kinases, MAP2K3/MKK3 or MAP2K6/MKK6, and potentially also MAP2K4/MKK4, as well as by TAB1-mediated autophosphorylation. MAPK14 phosphorylated on both Thr-180 and Tyr-182 is 10-20-fold more active than MAPK14 phosphorylated only on Thr-180, whereas MAPK14 phosphorylated on Tyr-182 alone is inactive. whereas Thr-180 is necessary for catalysis, Tyr-182 may be required for auto-activation and substrate recognition. Phosphorylated at Tyr-323 by ZAP70 in an alternative activation pathway in response to TCR signaling in T-cells. This alternative pathway is inhibited by GADD45A. Inhibited by dual specificity phosphatases, such as DUSP1, DUSP10, and DUSP16. Specifically inhibited by the binding of pyridinyl-imidazole compounds, which are cytokine-suppressive anti-inflammatory drugs (CSAID). SB203580 is an inhibitor of MAPK14. Its function is as follows. Serine/threonine kinase which acts as an essential component of the MAP kinase signal transduction pathway. MAPK14 is one of the four p38 MAPKs which play an important role in the cascades of cellular responses evoked by extracellular stimuli such as pro-inflammatory cytokines or physical stress leading to direct activation of transcription factors. Accordingly, p38 MAPKs phosphorylate a broad range of proteins and it has been estimated that they may have approximately 200 to 300 substrates each. Some of the targets are downstream kinases which are activated through phosphorylation and further phosphorylate additional targets. RPS6KA5/MSK1 and RPS6KA4/MSK2 can directly phosphorylate and activate transcription factors such as CREB1, ATF1, the NF-kappa-B isoform RELA/NFKB3, STAT1 and STAT3, but can also phosphorylate histone H3 and the nucleosomal protein HMGN1. RPS6KA5/MSK1 and RPS6KA4/MSK2 play important roles in the rapid induction of immediate-early genes in response to stress or mitogenic stimuli, either by inducing chromatin remodeling or by recruiting the transcription machinery. On the other hand, two other kinase targets, MAPKAPK2/MK2 and MAPKAPK3/MK3, participate in the control of gene expression mostly at the post-transcriptional level, by phosphorylating ZFP36 (tristetraprolin) and ELAVL1, and by regulating EEF2K, which is important for the elongation of mRNA during translation. MKNK1/MNK1 and MKNK2/MNK2, two other kinases activated by p38 MAPKs, regulate protein synthesis by phosphorylating the initiation factor EIF4E2. MAPK14 also interacts with casein kinase II, leading to its activation through autophosphorylation and further phosphorylation of TP53/p53. In the cytoplasm, the p38 MAPK pathway is an important regulator of protein turnover. For example, CFLAR is an inhibitor of TNF-induced apoptosis whose proteasome-mediated degradation is regulated by p38 MAPK phosphorylation. In a similar way, MAPK14 phosphorylates the ubiquitin ligase SIAH2, regulating its activity towards EGLN3. MAPK14 may also inhibit the lysosomal degradation pathway of autophagy by interfering with the intracellular trafficking of the transmembrane protein ATG9. Another function of MAPK14 is to regulate the endocytosis of membrane receptors by different mechanisms that impinge on the small GTPase RAB5A. In addition, clathrin-mediated EGFR internalization induced by inflammatory cytokines and UV irradiation depends on MAPK14-mediated phosphorylation of EGFR itself as well as of RAB5A effectors. Ectodomain shedding of transmembrane proteins is regulated by p38 MAPKs as well. In response to inflammatory stimuli, p38 MAPKs phosphorylate the membrane-associated metalloprotease ADAM17. Such phosphorylation is required for ADAM17-mediated ectodomain shedding of TGF-alpha family ligands, which results in the activation of EGFR signaling and cell proliferation. Another p38 MAPK substrate is FGFR1. FGFR1 can be translocated from the extracellular space into the cytosol and nucleus of target cells, and regulates processes such as rRNA synthesis and cell growth. FGFR1 translocation requires p38 MAPK activation. In the nucleus, many transcription factors are phosphorylated and activated by p38 MAPKs in response to different stimuli. Classical examples include ATF1, ATF2, ATF6, ELK1, PTPRH, DDIT3, TP53/p53 and MEF2C and MEF2A. The p38 MAPKs are emerging as important modulators of gene expression by regulating chromatin modifiers and remodelers. The promoters of several genes involved in the inflammatory response, such as IL6, IL8 and IL12B, display a p38 MAPK-dependent enrichment of histone H3 phosphorylation on 'Ser-10' (H3S10ph) in LPS-stimulated myeloid cells. This phosphorylation enhances the accessibility of the cryptic NF-kappa-B-binding sites marking promoters for increased NF-kappa-B recruitment. Phosphorylates CDC25B and CDC25C which is required for binding to 14-3-3 proteins and leads to initiation of a G2 delay after ultraviolet radiation. Phosphorylates TIAR following DNA damage, releasing TIAR from GADD45A mRNA and preventing mRNA degradation. The p38 MAPKs may also have kinase-independent roles, which are thought to be due to the binding to targets in the absence of phosphorylation. Protein O-Glc-N-acylation catalyzed by the OGT is regulated by MAPK14, and, although OGT does not seem to be phosphorylated by MAPK14, their interaction increases upon MAPK14 activation induced by glucose deprivation. This interaction may regulate OGT activity by recruiting it to specific targets such as neurofilament H, stimulating its O-Glc-N-acylation. Required in mid-fetal development for the growth of embryo-derived blood vessels in the labyrinth layer of the placenta. Also plays an essential role in developmental and stress-induced erythropoiesis, through regulation of EPO gene expression. Phosphorylates S100A9 at 'Thr-113'. The chain is Mitogen-activated protein kinase 14 from Canis lupus familiaris (Dog).